A 525-amino-acid chain; its full sequence is Peptide chain release factor 3 (525 aa).

The region spanning 11 to 279 (NNRRTFAIIS…AYLKYAPKPA (269 aa)) is the tr-type G domain. Residues 20–27 (SHPDAGKT), 88–92 (DTPGH), and 142–145 (NKLD) contribute to the GTP site.

It belongs to the TRAFAC class translation factor GTPase superfamily. Classic translation factor GTPase family. PrfC subfamily.

The protein localises to the cytoplasm. Increases the formation of ribosomal termination complexes and stimulates activities of RF-1 and RF-2. It binds guanine nucleotides and has strong preference for UGA stop codons. It may interact directly with the ribosome. The stimulation of RF-1 and RF-2 is significantly reduced by GTP and GDP, but not by GMP. In Ligilactobacillus salivarius (strain UCC118) (Lactobacillus salivarius), this protein is Peptide chain release factor 3.